The sequence spans 309 residues: Ankyrin repeat protein VACWR203 (309 aa).

5 ANK repeats span residues 13–44 (SVFK…SLTI), 110–142 (KYGT…DINA), 160–189 (FVYH…DLTI), 197–231 (PVVY…RASH), and 269–298 (EGRT…DIVV).

The protein belongs to the orthopoxviruses VACWR203 protein family.

This is Ankyrin repeat protein VACWR203 from Bos taurus (Bovine).